A 140-amino-acid chain; its full sequence is Large ribosomal subunit protein uL16 (140 aa).

The protein belongs to the universal ribosomal protein uL16 family. In terms of assembly, part of the 50S ribosomal subunit.

In terms of biological role, binds 23S rRNA and is also seen to make contacts with the A and possibly P site tRNAs. This chain is Large ribosomal subunit protein uL16, found in Syntrophus aciditrophicus (strain SB).